A 32-amino-acid polypeptide reads, in one-letter code: Hyaluronidase-Pk1a (32 aa).

N-linked (GlcNAc...) asparagine glycosylation occurs at Asn-23.

This sequence belongs to the glycosyl hydrolase 56 family. Expressed by the venom gland.

The protein localises to the secreted. It carries out the reaction Random hydrolysis of (1-&gt;4)-linkages between N-acetyl-beta-D-glucosamine and D-glucuronate residues in hyaluronate.. In terms of biological role, hydrolyzes high molecular weight hyaluronic acid to produce small oligosaccharides. This Phoneutria keyserlingi (Brazilian wandering spider) protein is Hyaluronidase-Pk1a.